Reading from the N-terminus, the 464-residue chain is Alpha-amylase (464 aa).

Positions 1-21 (MKNTAGILAIAGMLIAPLAHA) are cleaved as a signal peptide. H107 and R213 together coordinate substrate. D215 functions as the Nucleophile in the catalytic mechanism. 218–219 (KH) is a binding site for substrate. E242 (proton donor) is an active-site residue. The substrate site is built by G247 and H313.

This sequence belongs to the glycosyl hydrolase 13 family.

Its subcellular location is the secreted. It catalyses the reaction Endohydrolysis of (1-&gt;4)-alpha-D-glucosidic linkages in polysaccharides containing three or more (1-&gt;4)-alpha-linked D-glucose units.. The polypeptide is Alpha-amylase (Aeromonas hydrophila).